A 147-amino-acid chain; its full sequence is Phosphoribosyl-AMP cyclohydrolase 2 (147 aa).

Asp-99 provides a ligand contact to Mg(2+). Position 100 (Cys-100) interacts with Zn(2+). Mg(2+) contacts are provided by Asp-101 and Asp-103. The Zn(2+) site is built by Cys-116 and Cys-123.

This sequence belongs to the PRA-CH family. As to quaternary structure, homodimer. Mg(2+) serves as cofactor. Requires Zn(2+) as cofactor.

The protein localises to the cytoplasm. It carries out the reaction 1-(5-phospho-beta-D-ribosyl)-5'-AMP + H2O = 1-(5-phospho-beta-D-ribosyl)-5-[(5-phospho-beta-D-ribosylamino)methylideneamino]imidazole-4-carboxamide. It functions in the pathway amino-acid biosynthesis; L-histidine biosynthesis; L-histidine from 5-phospho-alpha-D-ribose 1-diphosphate: step 3/9. Functionally, catalyzes the hydrolysis of the adenine ring of phosphoribosyl-AMP. This chain is Phosphoribosyl-AMP cyclohydrolase 2, found in Pseudomonas fluorescens (strain ATCC BAA-477 / NRRL B-23932 / Pf-5).